A 302-amino-acid polypeptide reads, in one-letter code: Acetaldehyde dehydrogenase (302 aa).

Catalysis depends on C131, which acts as the Acyl-thioester intermediate. Residues S162–N170 and N273 each bind NAD(+).

This sequence belongs to the acetaldehyde dehydrogenase family.

It catalyses the reaction acetaldehyde + NAD(+) + CoA = acetyl-CoA + NADH + H(+). This Acidovorax sp. (strain JS42) protein is Acetaldehyde dehydrogenase.